A 190-amino-acid chain; its full sequence is MIEIPSDLHPDLVPLAFLLGNWAGAGVSDFPGAEKCNFGQEVTFSHDGRDFLEYVSHTWVLDDEGKQVRPLETETGYWRIDKDRKVEVVMARDQGVIEIWYGELADQKPQIDLVTDAVARTAASGPYSGGKRLYGYVKSDLMWVGEKATPEVELRPYMSAHLKKVVTPEEVAEMARNLPDMPDDGIAFFK.

Residues 20–26 (GNWAGAG) carry the GXWXGXG motif.

The protein belongs to the nitrobindin family.

In Streptomyces griseus subsp. griseus (strain JCM 4626 / CBS 651.72 / NBRC 13350 / KCC S-0626 / ISP 5235), this protein is Ferric nitrobindin-like protein.